The chain runs to 247 residues: Sec-independent protein translocase protein TatC (247 aa).

The next 5 membrane-spanning stretches (helical) occupy residues 21-41 (IILL…KPLI), 71-91 (AFII…WAFV), 109-129 (ITFL…FPFI), 154-174 (FLLQ…VIML), and 195-215 (FCLL…HLMI).

The protein belongs to the TatC family. In terms of assembly, forms a complex with TatA.

Its subcellular location is the cell membrane. Part of the twin-arginine translocation (Tat) system that transports large folded proteins containing a characteristic twin-arginine motif in their signal peptide across membranes. This is Sec-independent protein translocase protein TatC from Listeria innocua serovar 6a (strain ATCC BAA-680 / CLIP 11262).